Reading from the N-terminus, the 56-residue chain is Sec-independent protein translocase protein TatA (56 aa).

The helical transmembrane segment at 1-21 threads the bilayer; the sequence is MALGPWQIFLILVIILVLFGA.

This sequence belongs to the TatA/E family. The Tat system comprises two distinct complexes: a TatABC complex, containing multiple copies of TatA, TatB and TatC subunits, and a separate TatA complex, containing only TatA subunits. Substrates initially bind to the TatABC complex, which probably triggers association of the separate TatA complex to form the active translocon.

The protein resides in the cell inner membrane. Functionally, part of the twin-arginine translocation (Tat) system that transports large folded proteins containing a characteristic twin-arginine motif in their signal peptide across membranes. TatA could form the protein-conducting channel of the Tat system. This chain is Sec-independent protein translocase protein TatA, found in Ehrlichia ruminantium (strain Welgevonden).